Reading from the N-terminus, the 263-residue chain is 3-deoxy-manno-octulosonate cytidylyltransferase (263 aa).

Belongs to the KdsB family.

It is found in the cytoplasm. The enzyme catalyses 3-deoxy-alpha-D-manno-oct-2-ulosonate + CTP = CMP-3-deoxy-beta-D-manno-octulosonate + diphosphate. The protein operates within nucleotide-sugar biosynthesis; CMP-3-deoxy-D-manno-octulosonate biosynthesis; CMP-3-deoxy-D-manno-octulosonate from 3-deoxy-D-manno-octulosonate and CTP: step 1/1. Its pathway is bacterial outer membrane biogenesis; lipopolysaccharide biosynthesis. In terms of biological role, activates KDO (a required 8-carbon sugar) for incorporation into bacterial lipopolysaccharide in Gram-negative bacteria. In Burkholderia cenocepacia (strain ATCC BAA-245 / DSM 16553 / LMG 16656 / NCTC 13227 / J2315 / CF5610) (Burkholderia cepacia (strain J2315)), this protein is 3-deoxy-manno-octulosonate cytidylyltransferase.